Here is a 733-residue protein sequence, read N- to C-terminus: MNSDDNVEADASSNIIKDSPKIKEQENTSTVNESDVLATSTTASSGVKRKRLPNDLVGQLRDKIQENPNDISSWYALVEEYGSKGKHEELRETYEQMLRPFPYVPRVWVDYISSELAFNDFHAVELLFSRCLVKVLSVDLWTLYLSYIRRINPDGEGQSRSTITQAYEFVINTIGVDILSGPIWSEFVDFLRSGPANSTWEQQQKLDHVRRIYQRAITTPIHNIEKLWRDYDAFENSVNRATARKFVAEKSPVYMAARAAMRELSNLTEGLRVYDFTFERKYTKVERIAYSRWMNWIKWEQSDPLDLQHGTMLQNRIAYAFEQAMLYVPLCPQIWLDGFSYFLSISDEQRALQTIRRGMRYCPSNFVLHVRYAEHEEANNRTSEIRSTYESLIAALAREISQLDSKASSSSESSTDGNPQEKKLPEHLVKRKSRLVRQYSLAWCCLINAIRRTEGVKAARAIFTKARKAPYQSHEIYIASAMMEHHCSRDPVIASRIFELGMRHFGDVPAYVYKYLSYLIAINDETNARALFEKAIPRIAADEAKPIYQKWLDYESNYGDLNAAIALSQRMAVVYPQESTQAIFLSRYGLKDDAEEEERETKEAEKIRELSVRLNGGNGFPGHVHNNREDDEVSIASTSSKSNVEMEDTRLLPASLELANTQGASNPPTSALPTVPVPLPSIITEFLDELPAPQVITGPRIQPTKLIDHIIKSDIPFIRLRNANAHLKRARFN.

The interval 1-45 (MNSDDNVEADASSNIIKDSPKIKEQENTSTVNESDVLATSTTASS) is disordered. Over residues 27-45 (NTSTVNESDVLATSTTASS) the composition is skewed to polar residues. HAT repeat units follow at residues 85 to 117 (GKHE…SELA), 119 to 150 (NDFH…YIRR), 158 to 193 (QSRS…FLRS), 204 to 237 (QKLD…FENS), 269 to 302 (EGLR…WEQS), and 312 to 344 (MLQN…YFLS). Residues 404-414 (DSKASSSSESS) show a composition bias toward low complexity. The interval 404 to 425 (DSKASSSSESSTDGNPQEKKLP) is disordered. Residues 523–557 (NDETNARALFEKAIPRIAADEAKPIYQKWLDYESN) form an HAT 7 repeat.

It is found in the nucleus. The protein localises to the cytoplasm. Its function is as follows. Component of the cleavage factor IA (CFIA) complex, which is involved in the endonucleolytic cleavage during polyadenylation-dependent pre-mRNA 3'-end formation. The chain is mRNA 3'-end-processing protein rna14 (rna14) from Schizosaccharomyces pombe (strain 972 / ATCC 24843) (Fission yeast).